A 388-amino-acid polypeptide reads, in one-letter code: Succinate--CoA ligase [ADP-forming] subunit beta (388 aa).

An ATP-grasp domain is found at 9 to 244 (KQLFAEYGLP…PSQEDSREAE (236 aa)). Residues K46, 53-55 (GRG), E99, T102, and E107 each bind ATP. N199 and D213 together coordinate Mg(2+). Substrate-binding positions include N264 and 321–323 (GIV).

Belongs to the succinate/malate CoA ligase beta subunit family. Heterotetramer of two alpha and two beta subunits. Mg(2+) serves as cofactor.

The catalysed reaction is succinate + ATP + CoA = succinyl-CoA + ADP + phosphate. It carries out the reaction GTP + succinate + CoA = succinyl-CoA + GDP + phosphate. Its pathway is carbohydrate metabolism; tricarboxylic acid cycle; succinate from succinyl-CoA (ligase route): step 1/1. Succinyl-CoA synthetase functions in the citric acid cycle (TCA), coupling the hydrolysis of succinyl-CoA to the synthesis of either ATP or GTP and thus represents the only step of substrate-level phosphorylation in the TCA. The beta subunit provides nucleotide specificity of the enzyme and binds the substrate succinate, while the binding sites for coenzyme A and phosphate are found in the alpha subunit. The polypeptide is Succinate--CoA ligase [ADP-forming] subunit beta (Marinobacter nauticus (strain ATCC 700491 / DSM 11845 / VT8) (Marinobacter aquaeolei)).